The chain runs to 257 residues: Imidazole glycerol phosphate synthase subunit HisF (257 aa).

Catalysis depends on residues Asp12 and Asp131.

The protein belongs to the HisA/HisF family. In terms of assembly, heterodimer of HisH and HisF.

It localises to the cytoplasm. The catalysed reaction is 5-[(5-phospho-1-deoxy-D-ribulos-1-ylimino)methylamino]-1-(5-phospho-beta-D-ribosyl)imidazole-4-carboxamide + L-glutamine = D-erythro-1-(imidazol-4-yl)glycerol 3-phosphate + 5-amino-1-(5-phospho-beta-D-ribosyl)imidazole-4-carboxamide + L-glutamate + H(+). Its pathway is amino-acid biosynthesis; L-histidine biosynthesis; L-histidine from 5-phospho-alpha-D-ribose 1-diphosphate: step 5/9. IGPS catalyzes the conversion of PRFAR and glutamine to IGP, AICAR and glutamate. The HisF subunit catalyzes the cyclization activity that produces IGP and AICAR from PRFAR using the ammonia provided by the HisH subunit. The protein is Imidazole glycerol phosphate synthase subunit HisF of Rhodococcus opacus (strain B4).